The sequence spans 331 residues: Ketol-acid reductoisomerase (NADP(+)) (331 aa).

A KARI N-terminal Rossmann domain is found at 2–182 (VEIYYDDDAN…GGTRAGALRT (181 aa)). Residues 25–28 (FGSQ), serine 51, and serine 53 contribute to the NADP(+) site. Histidine 108 is an active-site residue. Glycine 134 contributes to the NADP(+) binding site. In terms of domain architecture, KARI C-terminal knotted spans 183–328 (TFTEETETDL…GKLRPMMSWI (146 aa)). The Mg(2+) site is built by aspartate 191, glutamate 195, glutamate 227, and glutamate 231. Serine 252 lines the substrate pocket.

This sequence belongs to the ketol-acid reductoisomerase family. Mg(2+) is required as a cofactor.

The enzyme catalyses (2R)-2,3-dihydroxy-3-methylbutanoate + NADP(+) = (2S)-2-acetolactate + NADPH + H(+). It carries out the reaction (2R,3R)-2,3-dihydroxy-3-methylpentanoate + NADP(+) = (S)-2-ethyl-2-hydroxy-3-oxobutanoate + NADPH + H(+). Its pathway is amino-acid biosynthesis; L-isoleucine biosynthesis; L-isoleucine from 2-oxobutanoate: step 2/4. The protein operates within amino-acid biosynthesis; L-valine biosynthesis; L-valine from pyruvate: step 2/4. Its function is as follows. Involved in the biosynthesis of branched-chain amino acids (BCAA). Catalyzes an alkyl-migration followed by a ketol-acid reduction of (S)-2-acetolactate (S2AL) to yield (R)-2,3-dihydroxy-isovalerate. In the isomerase reaction, S2AL is rearranged via a Mg-dependent methyl migration to produce 3-hydroxy-3-methyl-2-ketobutyrate (HMKB). In the reductase reaction, this 2-ketoacid undergoes a metal-dependent reduction by NADPH to yield (R)-2,3-dihydroxy-isovalerate. The chain is Ketol-acid reductoisomerase (NADP(+)) from Parafrankia sp. (strain EAN1pec).